Consider the following 151-residue polypeptide: Transcriptional regulator MraZ (151 aa).

2 SpoVT-AbrB domains span residues 5-52 and 81-124; these read ANAV…PLDE and AVDL…DEDA.

Belongs to the MraZ family. Forms oligomers.

Its subcellular location is the cytoplasm. It localises to the nucleoid. This is Transcriptional regulator MraZ from Pseudomonas putida (strain ATCC 700007 / DSM 6899 / JCM 31910 / BCRC 17059 / LMG 24140 / F1).